The primary structure comprises 195 residues: uncharacterized protein (195 aa).

This is an uncharacterized protein from Bacillus subtilis (strain 168).